A 512-amino-acid polypeptide reads, in one-letter code: Cytochrome P450 71BT1 (512 aa).

The N-terminal stretch at M1–K24 is a signal peptide. Residues N111 and N168 are each glycosylated (N-linked (GlcNAc...) asparagine). Position 447 (C447) interacts with heme.

It belongs to the cytochrome P450 family.

The sequence is that of Cytochrome P450 71BT1 from Catharanthus roseus (Madagascar periwinkle).